Here is a 278-residue protein sequence, read N- to C-terminus: Nucleotide-binding protein LHK_02029 (278 aa).

Residue 8 to 15 (GLAGSGKS) participates in ATP binding. 57–60 (DTRD) lines the GTP pocket.

This sequence belongs to the RapZ-like family.

Displays ATPase and GTPase activities. The protein is Nucleotide-binding protein LHK_02029 of Laribacter hongkongensis (strain HLHK9).